Reading from the N-terminus, the 251-residue chain is HTH-type transcriptional regulator UlaR (251 aa).

Residues 3–58 (EAQRHQILLEMLAQLGFVTVEKVVERLGISPATARRDINKLDESGKLKKVRNGAEA) enclose the HTH deoR-type domain. Positions 20 to 39 (VTVEKVVERLGISPATARRD) form a DNA-binding region, H-T-H motif.

It is found in the cytoplasm. In terms of biological role, represses ulaG and the ulaABCDEF operon. In Escherichia coli (strain SMS-3-5 / SECEC), this protein is HTH-type transcriptional regulator UlaR.